Reading from the N-terminus, the 153-residue chain is MKMRVLWVGKTQEEWVRRGIDEYAGRIRRYTPLELAEAKEEKGAAAEAMREREGERLVKLLPRNARLILLDERGEQLSSPDLAGFIAANRDGGVQELAFAIGGAYGFSDSFRSMAYKTIALSRMTFTHQMVRIFLLEQIYRGFTIINGEPYHH.

S-adenosyl-L-methionine-binding positions include Leu-70, Gly-102, and 121–126; that span reads LSRMTF.

This sequence belongs to the RNA methyltransferase RlmH family. In terms of assembly, homodimer.

Its subcellular location is the cytoplasm. It catalyses the reaction pseudouridine(1915) in 23S rRNA + S-adenosyl-L-methionine = N(3)-methylpseudouridine(1915) in 23S rRNA + S-adenosyl-L-homocysteine + H(+). Its function is as follows. Specifically methylates the pseudouridine at position 1915 (m3Psi1915) in 23S rRNA. In Geotalea uraniireducens (strain Rf4) (Geobacter uraniireducens), this protein is Ribosomal RNA large subunit methyltransferase H.